A 291-amino-acid chain; its full sequence is Bifunctional protein FolD (291 aa).

Residues 171 to 173 (GVS) and I239 each bind NADP(+).

Belongs to the tetrahydrofolate dehydrogenase/cyclohydrolase family. In terms of assembly, homodimer.

It catalyses the reaction (6R)-5,10-methylene-5,6,7,8-tetrahydrofolate + NADP(+) = (6R)-5,10-methenyltetrahydrofolate + NADPH. The enzyme catalyses (6R)-5,10-methenyltetrahydrofolate + H2O = (6R)-10-formyltetrahydrofolate + H(+). It functions in the pathway one-carbon metabolism; tetrahydrofolate interconversion. In terms of biological role, catalyzes the oxidation of 5,10-methylenetetrahydrofolate to 5,10-methenyltetrahydrofolate and then the hydrolysis of 5,10-methenyltetrahydrofolate to 10-formyltetrahydrofolate. The sequence is that of Bifunctional protein FolD from Xylella fastidiosa (strain Temecula1 / ATCC 700964).